The primary structure comprises 159 residues: Probable minor fimbrial protein (159 aa).

The propeptide at 1–6 is leader sequence; that stretch reads MKKMHG. Position 7 is an N-methylphenylalanine (Phe-7). Residues 7-29 form a helical membrane-spanning segment; sequence FTLIELMIVVAIIGVLASIALMQ. 2 disulfide bridges follow: Cys-56–Cys-71 and Cys-140–Cys-153.

The protein belongs to the N-Me-Phe pilin family. The pili are polar flexible filaments of about 5.4 nanometers diameter and 2.5 micrometers average length; they consist of only a single polypeptide chain arranged in a helical configuration of five subunits per turn in the assembled pilus.

The protein resides in the fimbrium. The protein localises to the membrane. This Dichelobacter nodosus (Bacteroides nodosus) protein is Probable minor fimbrial protein (fimZ).